Consider the following 471-residue polypeptide: Eukaryotic translation initiation factor 3 subunit M (471 aa).

Residues 39-61 form a disordered region; the sequence is EISSLLEPLRQQEQSEEEPDRKQ. The 172-residue stretch at 206-377 folds into the PCI domain; that stretch reads DFELAQSHVV…SEFLVHRATY (172 aa). The disordered stretch occupies residues 419–471; sequence QAATEEANQGKSGEKGGKGGDRRRNPQHQQQQQQSQPSQPQQPRETELVAGAE. Residues 430–442 are compositionally biased toward basic and acidic residues; the sequence is SGEKGGKGGDRRR. The segment covering 445–461 has biased composition (low complexity); sequence QHQQQQQQSQPSQPQQP.

The protein belongs to the eIF-3 subunit M family. As to quaternary structure, component of the eukaryotic translation initiation factor 3 (eIF-3) complex.

It localises to the cytoplasm. Component of the eukaryotic translation initiation factor 3 (eIF-3) complex, which is involved in protein synthesis of a specialized repertoire of mRNAs and, together with other initiation factors, stimulates binding of mRNA and methionyl-tRNAi to the 40S ribosome. The eIF-3 complex specifically targets and initiates translation of a subset of mRNAs involved in cell proliferation. This is Eukaryotic translation initiation factor 3 subunit M from Aspergillus clavatus (strain ATCC 1007 / CBS 513.65 / DSM 816 / NCTC 3887 / NRRL 1 / QM 1276 / 107).